The primary structure comprises 95 residues: MSTHLCAIYKSPKREGMFLYVAKRDQFDSVPEALRQMFGKPQFVMLFNLNGEKQLKRSKNEEVLQAIQTQGFFLQMPPPPENLLKTFLEQNRGEA.

The YcgL domain maps to 4–88 (HLCAIYKSPK…PPENLLKTFL (85 aa)).

The polypeptide is YcgL domain-containing protein APJL_0712 (Actinobacillus pleuropneumoniae serotype 3 (strain JL03)).